A 132-amino-acid chain; its full sequence is D-ribose pyranase (132 aa).

His20 acts as the Proton donor in catalysis. Substrate is bound by residues Asp28, His99, and 121 to 123; that span reads YSN.

This sequence belongs to the RbsD / FucU family. RbsD subfamily. Homodecamer.

The protein resides in the cytoplasm. It catalyses the reaction beta-D-ribopyranose = beta-D-ribofuranose. It functions in the pathway carbohydrate metabolism; D-ribose degradation; D-ribose 5-phosphate from beta-D-ribopyranose: step 1/2. Functionally, catalyzes the interconversion of beta-pyran and beta-furan forms of D-ribose. This chain is D-ribose pyranase, found in Pseudomonas putida (strain ATCC 47054 / DSM 6125 / CFBP 8728 / NCIMB 11950 / KT2440).